Here is a 172-residue protein sequence, read N- to C-terminus: Endoribonuclease YbeY (172 aa).

Residues His134, His138, and His144 each contribute to the Zn(2+) site.

This sequence belongs to the endoribonuclease YbeY family. Zn(2+) is required as a cofactor.

It is found in the cytoplasm. In terms of biological role, single strand-specific metallo-endoribonuclease involved in late-stage 70S ribosome quality control and in maturation of the 3' terminus of the 16S rRNA. In Burkholderia cenocepacia (strain HI2424), this protein is Endoribonuclease YbeY.